A 236-amino-acid polypeptide reads, in one-letter code: MVLSGRGMLDGGADDVGLWLGMQDFLVFCESAMYATCPLCGLFSDSPKEGRSGGGGGSEGQRTDSRLQLPTTSIVDSPGKRSLCVRASDGAGERDAGRAAAAPVRERLWLLRLCQHPRPLLQVLPRQPPPDRDVPGAVVIVVHGASRRGTVPEGIPVDEGAMPPPPPPRAKTKSRCAACGRRVGLMGFECRCGAVFCGAHPLLGQARLWLRLQGRAGRDAIARANPVVSADKVDKL.

Disordered regions lie at residues 48–81 and 150–173; these read KEGR…PGKR and TVPE…AKTK. The segment covering 66-75 has biased composition (polar residues); sequence RLQLPTTSIV. The segment at 170–216 adopts an AN1-type; degenerate zinc-finger fold; it reads AKTKSRCAACGRRVGLMGFECRCGAVFCGAHPLLGQARLWLRLQGRA. The Zn(2+) site is built by C176, C179, C197, and H200.

In terms of biological role, may be involved in environmental stress response. The sequence is that of Zinc finger AN1 domain-containing stress-associated protein 13 (SAP13) from Oryza sativa subsp. japonica (Rice).